A 372-amino-acid chain; its full sequence is Queuine tRNA-ribosyltransferase (372 aa).

The active-site Proton acceptor is the Asp92. Residues 92 to 96, Asp146, Gln188, and Gly215 each bind substrate; that span reads DSGGY. The RNA binding stretch occupies residues 246–252; that stretch reads GIGSLKE. Asp265 acts as the Nucleophile in catalysis. Positions 270 to 274 are RNA binding; important for wobble base 34 recognition; sequence TRLGR. Residues Cys303, Cys305, Cys308, and His334 each coordinate Zn(2+).

Belongs to the queuine tRNA-ribosyltransferase family. Homodimer. Within each dimer, one monomer is responsible for RNA recognition and catalysis, while the other monomer binds to the replacement base PreQ1. Zn(2+) serves as cofactor.

It catalyses the reaction 7-aminomethyl-7-carbaguanine + guanosine(34) in tRNA = 7-aminomethyl-7-carbaguanosine(34) in tRNA + guanine. It functions in the pathway tRNA modification; tRNA-queuosine biosynthesis. In terms of biological role, catalyzes the base-exchange of a guanine (G) residue with the queuine precursor 7-aminomethyl-7-deazaguanine (PreQ1) at position 34 (anticodon wobble position) in tRNAs with GU(N) anticodons (tRNA-Asp, -Asn, -His and -Tyr). Catalysis occurs through a double-displacement mechanism. The nucleophile active site attacks the C1' of nucleotide 34 to detach the guanine base from the RNA, forming a covalent enzyme-RNA intermediate. The proton acceptor active site deprotonates the incoming PreQ1, allowing a nucleophilic attack on the C1' of the ribose to form the product. After dissociation, two additional enzymatic reactions on the tRNA convert PreQ1 to queuine (Q), resulting in the hypermodified nucleoside queuosine (7-(((4,5-cis-dihydroxy-2-cyclopenten-1-yl)amino)methyl)-7-deazaguanosine). In Prochlorococcus marinus (strain MIT 9301), this protein is Queuine tRNA-ribosyltransferase.